The sequence spans 157 residues: Subgroup A Rous sarcoma virus receptor pg950 (157 aa).

An N-terminal signal peptide occupies residues methionine 1–glycine 19. 2 N-linked (GlcNAc...) asparagine glycosylation sites follow: asparagine 20 and asparagine 24. Residues asparagine 20–arginine 102 are Extracellular-facing. Residues serine 28 to threonine 71 form the LDL-receptor class A domain. Disulfide bonds link cysteine 30–cysteine 47, cysteine 37–cysteine 60, and cysteine 54–cysteine 69. Residue asparagine 81 is glycosylated (N-linked (GlcNAc...) asparagine). A helical transmembrane segment spans residues methionine 103 to glycine 125. The Cytoplasmic segment spans residues lysine 126–serine 157.

(Microbial infection) Interacts with Rous sarcoma virus envelope protein; this interaction allows the viral attachment.

It is found in the membrane. Functionally, responsible for susceptibility to the retrovirus subgroup A Rous sarcoma virus. In Coturnix japonica (Japanese quail), this protein is Subgroup A Rous sarcoma virus receptor pg950.